The following is a 676-amino-acid chain: tRNA 5-methylaminomethyl-2-thiouridine biosynthesis bifunctional protein MnmC (676 aa).

Residues 1-241 (MFTVTPAKIY…KRECLCGIKN (241 aa)) are tRNA (mnm(5)s(2)U34)-methyltransferase. The segment at 268 to 676 (IGGGIASLFT…RKLLKGTEIK (409 aa)) is FAD-dependent cmnm(5)s(2)U34 oxidoreductase.

In the N-terminal section; belongs to the methyltransferase superfamily. tRNA (mnm(5)s(2)U34)-methyltransferase family. It in the C-terminal section; belongs to the DAO family. FAD is required as a cofactor.

It localises to the cytoplasm. It catalyses the reaction 5-aminomethyl-2-thiouridine(34) in tRNA + S-adenosyl-L-methionine = 5-methylaminomethyl-2-thiouridine(34) in tRNA + S-adenosyl-L-homocysteine + H(+). In terms of biological role, catalyzes the last two steps in the biosynthesis of 5-methylaminomethyl-2-thiouridine (mnm(5)s(2)U) at the wobble position (U34) in tRNA. Catalyzes the FAD-dependent demodification of cmnm(5)s(2)U34 to nm(5)s(2)U34, followed by the transfer of a methyl group from S-adenosyl-L-methionine to nm(5)s(2)U34, to form mnm(5)s(2)U34. The protein is tRNA 5-methylaminomethyl-2-thiouridine biosynthesis bifunctional protein MnmC of Histophilus somni (strain 2336) (Haemophilus somnus).